A 337-amino-acid polypeptide reads, in one-letter code: Casein kinase II subunit alpha (337 aa).

The 286-residue stretch at 47–332 (YEIIRKIGRG…TREAMEHPYF (286 aa)) folds into the Protein kinase domain. Residues 53–61 (IGRGKYSEV) and Lys-76 each bind ATP. Asp-164 serves as the catalytic Proton acceptor.

It belongs to the protein kinase superfamily. CMGC Ser/Thr protein kinase family. CK2 subfamily. As to quaternary structure, tetramer of two alpha and two beta chains.

It catalyses the reaction L-seryl-[protein] + ATP = O-phospho-L-seryl-[protein] + ADP + H(+). It carries out the reaction L-threonyl-[protein] + ATP = O-phospho-L-threonyl-[protein] + ADP + H(+). In terms of biological role, casein kinases are operationally defined by their preferential utilization of acidic proteins such as caseins as substrates. The alpha chain contains the catalytic site. This Dictyostelium discoideum (Social amoeba) protein is Casein kinase II subunit alpha (casK).